We begin with the raw amino-acid sequence, 375 residues long: Regulatory protein E2 (375 aa).

The transactivation domain stretch occupies residues 1–200; sequence MENLCQRLNA…QVICCPEFVS (200 aa). Positions 264-292 are disordered; that stretch reads ATQPGQSVDYTNNNLHSTSGGHHPGRDTS. Polar residues predominate over residues 266–283; the sequence is QPGQSVDYTNNNLHSTSG. Residues 296–375 form a DNA-binding domain region; that stretch reads TVFIVHLKGD…ITSTLGIMSL (80 aa). A Glycyl lysine isopeptide (Lys-Gly) (interchain with G-Cter in SUMO) cross-link involves residue K303.

This sequence belongs to the papillomaviridae E2 protein family. As to quaternary structure, binds DNA as homodimer. Interacts with protein E1; this interaction greatly increases E1 DNA-binding activity. Interacts with protein L1; this interaction enhances E2-dependent replication and transcription activation. Interacts with protein L2; this interaction inhibits E2 transcriptional activity but not DNA replication function E2. Interacts with protein E7; this interaction inhibits E7 oncogenic activity. Interacts with host TAF1; this interaction modulates E2-dependent transcriptional regulation. Interacts with host BRD4; this interaction mediates E2 transcriptional activation function. Additionally, the interaction with host BRD4 on mitotic chromosomes mediates tethering of the viral genome. Interacts with host TOPBP1; this interaction is required for optimal viral DNA replication. Post-translationally, phosphorylated. In terms of processing, sumoylation plays a regulatory role in E2 transcriptional activity.

The protein resides in the host nucleus. In terms of biological role, plays a role in the initiation of viral DNA replication. A dimer of E2 interacts with a dimer of E1 in order to improve specificity of E1 DNA binding activity. Once the complex recognizes and binds DNA at specific sites, the E2 dimer is removed from DNA. E2 also regulates viral transcription through binding to the E2RE response element (5'-ACCNNNNNNGGT-3') present in multiple copies in the regulatory regions of the viral genome. Activates or represses transcription depending on E2RE's position with regards to proximal promoter elements including the TATA-box. Repression occurs by sterically hindering the assembly of the transcription initiation complex. The chain is Regulatory protein E2 from Human papillomavirus type 26.